The sequence spans 100 residues: Urease subunit gamma (100 aa).

This sequence belongs to the urease gamma subunit family. In terms of assembly, heterotrimer of UreA (gamma), UreB (beta) and UreC (alpha) subunits. Three heterotrimers associate to form the active enzyme.

It localises to the cytoplasm. It carries out the reaction urea + 2 H2O + H(+) = hydrogencarbonate + 2 NH4(+). The protein operates within nitrogen metabolism; urea degradation; CO(2) and NH(3) from urea (urease route): step 1/1. The chain is Urease subunit gamma from Cereibacter sphaeroides (strain ATCC 17025 / ATH 2.4.3) (Rhodobacter sphaeroides).